The primary structure comprises 367 residues: NAD(P)H-quinone oxidoreductase subunit 1, chloroplastic (367 aa).

The next 8 helical transmembrane spans lie at 29-49, 96-116, 128-148, 176-196, 204-224, 266-286, 304-324, and 347-367; these read WIPL…LVVV, VLLF…SYLI, INLG…GLLM, LALC…IDIV, ILGW…IAAL, LVSA…PIPI, VISA…FLFL, and FLLP…IALL.

It belongs to the complex I subunit 1 family. NDH is composed of at least 16 different subunits, 5 of which are encoded in the nucleus.

Its subcellular location is the plastid. The protein localises to the chloroplast thylakoid membrane. The catalysed reaction is a plastoquinone + NADH + (n+1) H(+)(in) = a plastoquinol + NAD(+) + n H(+)(out). It carries out the reaction a plastoquinone + NADPH + (n+1) H(+)(in) = a plastoquinol + NADP(+) + n H(+)(out). Its function is as follows. NDH shuttles electrons from NAD(P)H:plastoquinone, via FMN and iron-sulfur (Fe-S) centers, to quinones in the photosynthetic chain and possibly in a chloroplast respiratory chain. The immediate electron acceptor for the enzyme in this species is believed to be plastoquinone. Couples the redox reaction to proton translocation, and thus conserves the redox energy in a proton gradient. The chain is NAD(P)H-quinone oxidoreductase subunit 1, chloroplastic from Mesostigma viride (Green alga).